Here is a 155-residue protein sequence, read N- to C-terminus: Endoribonuclease YbeY (155 aa).

H118, H122, and H128 together coordinate Zn(2+).

This sequence belongs to the endoribonuclease YbeY family. It depends on Zn(2+) as a cofactor.

It is found in the cytoplasm. Functionally, single strand-specific metallo-endoribonuclease involved in late-stage 70S ribosome quality control and in maturation of the 3' terminus of the 16S rRNA. This is Endoribonuclease YbeY from Bordetella petrii (strain ATCC BAA-461 / DSM 12804 / CCUG 43448).